Reading from the N-terminus, the 92-residue chain is Acylphosphatase (92 aa).

Positions 5-90 constitute an Acylphosphatase-like domain; that stretch reads TWRLVAHGRV…GEFAGFEFRP (86 aa). Active-site residues include Arg20 and Asn38.

Belongs to the acylphosphatase family.

The catalysed reaction is an acyl phosphate + H2O = a carboxylate + phosphate + H(+). The sequence is that of Acylphosphatase (acyP) from Cupriavidus necator (strain ATCC 17699 / DSM 428 / KCTC 22496 / NCIMB 10442 / H16 / Stanier 337) (Ralstonia eutropha).